The primary structure comprises 188 residues: Adrenodoxin, mitochondrial (188 aa).

The N-terminal 64 residues, 1–64 (MAAAPGARLL…RPLSVSARAR (64 aa)), are a transit peptide targeting the mitochondrion. At S67 the chain carries Phosphoserine. The 107-residue stretch at 69–175 (DKITVHFKNR…NMTVRVPEAV (107 aa)) folds into the 2Fe-2S ferredoxin-type domain. K70 bears the N6-acetyllysine; alternate mark. K70 is subject to N6-succinyllysine; alternate. [2Fe-2S] cluster contacts are provided by C110, C116, C119, and C156. K162 carries the post-translational modification N6-succinyllysine. S181 carries the post-translational modification Phosphoserine.

The protein belongs to the adrenodoxin/putidaredoxin family. Interacts with CYP11A1. Requires [2Fe-2S] cluster as cofactor.

It localises to the mitochondrion matrix. Essential for the synthesis of various steroid hormones, participates in the reduction of mitochondrial cytochrome P450 for steroidogenesis. Transfers electrons from adrenodoxin reductase to CYP11A1, a cytochrome P450 that catalyzes cholesterol side-chain cleavage. Does not form a ternary complex with adrenodoxin reductase and CYP11A1 but shuttles between the two enzymes to transfer electrons. This chain is Adrenodoxin, mitochondrial (Fdx1), found in Mus musculus (Mouse).